The primary structure comprises 798 residues: Palmitoyl thioesterase CPT1C (798 aa).

The Cytoplasmic portion of the chain corresponds to 1–52; that stretch reads MAEAHQASSLLSSLSSDGAEVELSSPVWQEIYLCALRSWKRHLWRVWNDFLA. A helical membrane pass occupies residues 53–75; it reads GVVPATPLSWLFLFSTIQLACLL. The Lumenal portion of the chain corresponds to 76–103; the sequence is QLDPSLGLMEKIKELLPDWGGQHHQLQG. Residues 104–126 traverse the membrane as a helical segment; that stretch reads FLSAAVFASCLWGALIFTLHVAL. Residues 127-798 lie on the Cytoplasmic side of the membrane; sequence RLLLSHHGWL…PNTPTSSTNL (672 aa). The Proton acceptor role is filled by H469. A CoA-binding site is contributed by 551-563; the sequence is GKSFIKCCHVSSD. 3 residues coordinate (R)-carnitine: Y585, S587, and T598. The required for interaction with GRIA1 stretch occupies residues 759-798; that stretch reads LFRVGQHFKRQFRGENSDYRYNFLSCKTVDPNTPTSSTNL.

Belongs to the carnitine/choline acetyltransferase family. As to quaternary structure, peripherally associated with AMPAR complex. AMPAR complex consists of an inner core made of 4 pore-forming GluA/GRIA proteins (GRIA1, GRIA2, GRIA3 and GRIA4) and 4 major auxiliary subunits arranged in a twofold symmetry. One of the two pairs of distinct binding sites is occupied either by CNIH2, CNIH3 or CACNG2, CACNG3. The other harbors CACNG2, CACNG3, CACNG4, CACNG8 or GSG1L. This inner core of AMPAR complex is complemented by outer core constituents binding directly to the GluA/GRIA proteins at sites distinct from the interaction sites of the inner core constituents. Outer core constituents include at least PRRT1, PRRT2, CKAMP44/SHISA9, FRRS1L and NRN1. The proteins of the inner and outer core serve as a platform for other, more peripherally associated AMPAR constituents, including CPT1C. Alone or in combination, these auxiliary subunits control the gating and pharmacology of the AMPAR complex and profoundly impact their biogenesis and protein processing. Interacts with SACM1L; the interaction regulates SACM1L phosphatidylinositol-3-phosphatase activity and translocation to endoplasmic reticulum/trans Golgi network in a malonyl-CoA dependent manner. Interacts with ATL1. In terms of tissue distribution, predominantly expressed in brain (at protein level) and testis, highly expressed in the hippocampus, amygdala and cerebellum. Expressed in neurons but not astrocytes. Expressed in the ventral horn from spinal cords.

It is found in the synapse. It localises to the cell projection. The protein resides in the axon. The protein localises to the dendrite. Its subcellular location is the dendritic spine. It is found in the endoplasmic reticulum membrane. The catalysed reaction is S-hexadecanoyl-L-cysteinyl-[protein] + H2O = L-cysteinyl-[protein] + hexadecanoate + H(+). In terms of biological role, palmitoyl thioesterase specifically expressed in the endoplasmic reticulum of neurons. Modulates the trafficking of the glutamate receptor, AMPAR, to plasma membrane through depalmitoylation of GRIA1. Also regulates AMPR trafficking through the regulation of SACM1L phosphatidylinositol-3-phosphatase activity by interaction in a malonyl-CoA dependent manner. Binds malonyl-CoA and couples malonyl-CoA to ceramide levels, necessary for proper spine maturation and contributing to systemic energy homeostasis and appetite control. Binds to palmitoyl-CoA, but does not have carnitine palmitoyltransferase 1 catalytic activity or at very low levels. This chain is Palmitoyl thioesterase CPT1C (Cpt1c), found in Mus musculus (Mouse).